A 54-amino-acid chain; its full sequence is GIDPNYRTSRPEVGTHEGHKVYGPVENPKVLGIHGAIVGVDFDLCIADGSCINA.

The tract at residues 1 to 21 is disordered; it reads GIDPNYRTSRPEVGTHEGHKV. Positions 1-36 are N-terminal extension; the sequence is GIDPNYRTSRPEVGTHEGHKVYGPVENPKVLGIHGA. A compositionally biased stretch (basic and acidic residues) spans 9-20; the sequence is SRPEVGTHEGHK. Residues H16 and H19 each contribute to the Zn(2+) site. The residue at position 29 (K29) is an N6-methyllysine. Residue H34 participates in Zn(2+) binding. One can recognise a 4Fe-4S ferredoxin-type 1 domain in the interval 35-54; sequence GAIVGVDFDLCIADGSCINA. Positions 45 and 51 each coordinate [3Fe-4S] cluster.

[3Fe-4S] cluster is required as a cofactor. The cofactor is [4Fe-4S] cluster. Requires Zn(2+) as cofactor.

Ferredoxins are iron-sulfur proteins that transfer electrons in a wide variety of metabolic reactions. This is Zinc-containing ferredoxin A (zfx) from Sulfuracidifex metallicus (Sulfolobus metallicus).